Reading from the N-terminus, the 1034-residue chain is Condensin complex subunit 3 (1034 aa).

7 HEAT repeats span residues 95–132, 139–176, 178–213, 242–279, 281–317, 439–476, and 618–655; these read SPVNCLFNFLLQSHGASSMAVRFRVCQLINKLLVNLPE, DLFDKIHDAMLIRLKDRVPNVRIQAVLALARLQDPSDP, CPVSNAYVHLLENDSNPEVRRAVLTCIAPSAKSLPK, LTIAQRVKLLQQGLNDRSAAVKDVIQKKLIQAWLQYSE, DVLDLLHRLDVENSPEVSLSALNALFSVSPVGELVQN, TSLISSLAELLLFVLKDDDKRIQTVAEIISELREPIVT, and DFARQHLPLLLQILQLDEVKVKNSALNAVFDMLLLFGM. Residues 663–672 are compositionally biased toward polar residues; sequence TNPDDSQCKA. Residues 663–693 form a disordered region; the sequence is TNPDDSQCKAQENADEDISEQEKPGSVDENL. HEAT repeat units follow at residues 703 to 740, 785 to 823, and 878 to 915; these read ATVNGILHLFSGFLDSEIAEIRTETAEGLVKLMFSGRL, CFAEAFLPTLQTLFNAPASSPLADVDVANVAELLVDLTR, and ENSTDLLPLLDCAVEDVTDKVCERAIEKVRSQLRSGRE. Over residues 909–949 the composition is skewed to basic and acidic residues; the sequence is QLRSGREEHRVSKETEPQVSKETEDRTNLQENEEGKQKDEA. The segment at 909 to 1034 is disordered; sequence QLRSGREEHR…LSKLLNEEAN (126 aa). Positions 964 to 984 are enriched in basic residues; sequence RGKATKGRRKGPAAAATRRKA. Residues 985-999 show a composition bias toward basic and acidic residues; it reads SKAEEAEAEMERQEE.

It belongs to the CND3 (condensin subunit 3) family. Component of the condensin complex, which contains the XCAP-E/SMC2 and XCAP-C/SMC4 heterodimer, and three non SMC subunits that probably regulate the complex: XCAP-H/NCAPH, XCAP-D2/NCAPD2 and XCAP-G/NCAPG. Post-translationally, phosphorylated by cdk1. Its phosphorylation, as well as that of XCAP-D2 and XCAP-H subunits, activates the condensin complex and is required for chromosome condensation.

It localises to the nucleus. It is found in the cytoplasm. The protein localises to the chromosome. Functionally, regulatory subunit of the condensin complex, a complex required for conversion of interphase chromatin into mitotic-like condense chromosomes. The condensin complex probably introduces positive supercoils into relaxed DNA in the presence of type I topoisomerases and converts nicked DNA into positive knotted forms in the presence of type II topoisomerase. This is Condensin complex subunit 3 (ncapg) from Xenopus laevis (African clawed frog).